Reading from the N-terminus, the 110-residue chain is ATP synthase epsilon chain (110 aa).

The protein belongs to the ATPase epsilon chain family. As to quaternary structure, F-type ATPases have 2 components, CF(1) - the catalytic core - and CF(0) - the membrane proton channel. CF(1) has five subunits: alpha(3), beta(3), gamma(1), delta(1), epsilon(1). CF(0) has three main subunits: a, b and c.

The protein resides in the cell inner membrane. Produces ATP from ADP in the presence of a proton gradient across the membrane. In Rickettsia typhi (strain ATCC VR-144 / Wilmington), this protein is ATP synthase epsilon chain.